Reading from the N-terminus, the 1342-residue chain is Receptor tyrosine-protein kinase erbB-3 (1342 aa).

A signal peptide spans 1 to 19 (MRANDALQVLGLLFSLARG). The Extracellular portion of the chain corresponds to 20-643 (SEVGNSQAVC…LVLIGKTHLT (624 aa)). Cysteines 29 and 56 form a disulfide. An N-linked (GlcNAc...) asparagine glycan is attached at Asn-126. 12 disulfides stabilise this stretch: Cys-156–Cys-183, Cys-186–Cys-194, Cys-190–Cys-202, Cys-210–Cys-218, Cys-214–Cys-226, Cys-227–Cys-235, Cys-231–Cys-243, Cys-246–Cys-255, Cys-259–Cys-286, Cys-290–Cys-301, Cys-305–Cys-320, and Cys-323–Cys-327. N-linked (GlcNAc...) asparagine glycosylation occurs at Asn-250. Residues Asn-353, Asn-408, Asn-414, Asn-437, and Asn-469 are each glycosylated (N-linked (GlcNAc...) asparagine). 10 disulfides stabilise this stretch: Cys-500/Cys-509, Cys-504/Cys-517, Cys-520/Cys-529, Cys-533/Cys-549, Cys-552/Cys-565, Cys-556/Cys-573, Cys-576/Cys-585, Cys-589/Cys-610, Cys-613/Cys-621, and Cys-617/Cys-629. N-linked (GlcNAc...) asparagine glycosylation is present at Asn-522. The N-linked (GlcNAc...) asparagine glycan is linked to Asn-566. The N-linked (GlcNAc...) asparagine glycan is linked to Asn-616. A helical transmembrane segment spans residues 644–664 (MALTVIAGLVVIFMMLGGTFL). The Cytoplasmic segment spans residues 665–1342 (YWRGRRIQNK…LFPKANAQRT (678 aa)). Ser-686 is subject to Phosphoserine. A Protein kinase domain is found at 709–966 (LRKLKVLGSG…TFKELANEFT (258 aa)). ATP-binding positions include 715–723 (LGSGVFGTV), Lys-742, 788–790 (QYL), and 834–839 (NLAARN). The active-site Proton acceptor is the Asn-834. 2 disordered regions span residues 980–999 (RESG…TNKK) and 1033–1152 (LPVG…PGLE). The residue at position 982 (Ser-982) is a Phosphoserine. Positions 1042–1075 (RGSQSLLSPSSGYMPMNQGNLGESCQESAVSGSS) are enriched in polar residues.

Belongs to the protein kinase superfamily. Tyr protein kinase family. EGF receptor subfamily. As to quaternary structure, monomer and homodimer. Heterodimer with each of the other ERBB receptors (Potential). Interacts with CSPG5. Interacts with GRB7. Interacts with MUC1. Interacts with MYOC. Interacts with isoform 2 of PA2G4. Found in a ternary complex with NRG1 and ITGAV:ITGB3 or ITGA6:ITGB4. In terms of processing, autophosphorylated. Ligand-binding increases phosphorylation on tyrosine residues and promotes its association with the p85 subunit of phosphatidylinositol 3-kinase. Epithelial tissues and brain.

It localises to the cell membrane. It is found in the secreted. It carries out the reaction L-tyrosyl-[protein] + ATP = O-phospho-L-tyrosyl-[protein] + ADP + H(+). Tyrosine-protein kinase that plays an essential role as cell surface receptor for neuregulins. Binds to neuregulin-1 (NRG1) and is activated by it; ligand-binding increases phosphorylation on tyrosine residues and promotes its association with the p85 subunit of phosphatidylinositol 3-kinase. May also be activated by CSPG5. Involved in the regulation of myeloid cell differentiation. The chain is Receptor tyrosine-protein kinase erbB-3 (ERBB3) from Homo sapiens (Human).